We begin with the raw amino-acid sequence, 464 residues long: Probable mannosyltransferase KTR4 (464 aa).

The Cytoplasmic segment spans residues 1–11 (MRFLSKRILKP). Residues 12 to 32 (VLSVIILISIAVTVVLYFLTA) form a helical; Signal-anchor for type II membrane protein membrane-spanning segment. The segment at 33-130 (NENYLQAVKD…NLVRSGDPLA (98 aa)) is stem region. The Lumenal portion of the chain corresponds to 33 to 464 (NENYLQAVKD…SMSEEELEMY (432 aa)). The catalytic stretch occupies residues 131-464 (GKAKGTILSL…SMSEEELEMY (334 aa)). Glu352 (nucleophile) is an active-site residue.

It belongs to the glycosyltransferase 15 family.

The protein localises to the membrane. Its function is as follows. Possible glycosyltransferase that transfers an alpha-D-mannosyl residue from GDP-mannose into lipid-linked oligosaccharide, forming an alpha-(1-&gt;2)-D-mannosyl-D-mannose linkage. This chain is Probable mannosyltransferase KTR4 (KTR4), found in Saccharomyces cerevisiae (strain ATCC 204508 / S288c) (Baker's yeast).